The chain runs to 788 residues: Cadherin-10 (788 aa).

The signal sequence occupies residues 1–22 (MTIHQFLLLFLFWVCLPHFCSP). Positions 23–54 (EIMFRRTPVPQQRILSSRVPRSDGKILHRQKR) are excised as a propeptide. Cadherin domains are found at residues 55-160 (GWMW…EPTF), 161-269 (PEEI…PPRF), 270-384 (PQNT…PPVF), 385-487 (SRSS…DNAP), and 488-606 (QFAV…LLLP). Residues 55-613 (GWMWNQFFLL…LLPAGLSTGA (559 aa)) lie on the Extracellular side of the membrane. A glycan (N-linked (GlcNAc...) asparagine) is linked at Asn256. N-linked (GlcNAc...) asparagine glycans are attached at residues Asn438, Asn456, and Asn534. A helical transmembrane segment spans residues 614–634 (LIAILLCIIILLVIVVLFAAL). Over 635-788 (KRQRKKEPLI…YGGGESDKDS (154 aa)) the chain is Cytoplasmic. Phosphoserine is present on residues Ser784 and Ser788.

As to expression, predominantly expressed in brain. Also found in adult and fetal kidney. Very low levels detected in prostate and fetal lung.

It localises to the cell membrane. In terms of biological role, cadherins are calcium-dependent cell adhesion proteins. They preferentially interact with themselves in a homophilic manner in connecting cells; cadherins may thus contribute to the sorting of heterogeneous cell types. This Homo sapiens (Human) protein is Cadherin-10 (CDH10).